Consider the following 116-residue polypeptide: Large ribosomal subunit protein bL17 (116 aa).

Belongs to the bacterial ribosomal protein bL17 family. As to quaternary structure, part of the 50S ribosomal subunit. Contacts protein L32.

The protein is Large ribosomal subunit protein bL17 of Acaryochloris marina (strain MBIC 11017).